The sequence spans 204 residues: Small ribosomal subunit protein uS7 (204 aa).

At M1 the chain carries N-acetylmethionine. T2 is modified (N-acetylthreonine; in 40S ribosomal protein S5, N-terminally processed). T14 bears the Phosphothreonine mark. Position 47 is an N6-acetyllysine; alternate (K47). K47 participates in a covalent cross-link: Glycyl lysine isopeptide (Lys-Gly) (interchain with G-Cter in SUMO2); alternate. S142 bears the Phosphoserine mark.

This sequence belongs to the universal ribosomal protein uS7 family. In terms of assembly, component of the small ribosomal subunit. Part of the small subunit (SSU) processome, composed of more than 70 proteins and the RNA chaperone small nucleolar RNA (snoRNA) U3.

It is found in the cytoplasm. The protein localises to the nucleus. Its subcellular location is the nucleolus. Component of the small ribosomal subunit. The ribosome is a large ribonucleoprotein complex responsible for the synthesis of proteins in the cell. Part of the small subunit (SSU) processome, first precursor of the small eukaryotic ribosomal subunit. During the assembly of the SSU processome in the nucleolus, many ribosome biogenesis factors, an RNA chaperone and ribosomal proteins associate with the nascent pre-rRNA and work in concert to generate RNA folding, modifications, rearrangements and cleavage as well as targeted degradation of pre-ribosomal RNA by the RNA exosome. This is Small ribosomal subunit protein uS7 (Rps5) from Mus musculus (Mouse).